We begin with the raw amino-acid sequence, 194 residues long: Aminodeoxychorismate/anthranilate synthase component 2 (194 aa).

The Glutamine amidotransferase type-1 domain maps to 1–194 (MILMIDNYDS…IETYRKEVIA (194 aa)). Residues Cys79, His168, and Glu170 contribute to the active site.

In terms of assembly, monomer. Heterodimer consisting of two non-identical subunits: a glutamine amidotransferase subunit (PabA) and a aminodeoxychorismate synthase subunit (PabB).

It catalyses the reaction chorismate + L-glutamine = anthranilate + pyruvate + L-glutamate + H(+). The catalysed reaction is chorismate + L-glutamine = 4-amino-4-deoxychorismate + L-glutamate. It functions in the pathway amino-acid biosynthesis; L-tryptophan biosynthesis; L-tryptophan from chorismate: step 1/5. The protein operates within cofactor biosynthesis; tetrahydrofolate biosynthesis; 4-aminobenzoate from chorismate: step 1/2. Functionally, part of a heterodimeric complex that catalyzes the two-step biosynthesis of 4-amino-4-deoxychorismate (ADC), a precursor of p-aminobenzoate (PABA) and tetrahydrofolate. In the first step, a glutamine amidotransferase (PabA) generates ammonia as a substrate that, along with chorismate, is used in the second step, catalyzed by aminodeoxychorismate synthase (PabB) to produce ADC. PabA converts glutamine into glutamate only in the presence of stoichiometric amounts of PabB. Also involved in the biosynthesis of anthranilate. Complements a glutamine amidotransferase-negative mutant. This is Aminodeoxychorismate/anthranilate synthase component 2 from Bacillus subtilis (strain 168).